The sequence spans 71 residues: Conotoxin Bu24 (71 aa).

A signal peptide spans M1–S21. Residues L22–K44 constitute a propeptide that is removed on maturation. N70 bears the Asparagine amide mark.

The protein belongs to the conotoxin A superfamily. Contains 3 disulfide bonds. They are not indicated here, since framework IV presents two different connectivities (I-V, II-III, IV-VI and I-III, II-V, IV-VI). Expressed by the venom duct.

It localises to the secreted. This Conus bullatus (Bubble cone) protein is Conotoxin Bu24.